The sequence spans 383 residues: MSNRWLLPENIADVLPSEARKIEELRRRMLDLFRTYGYELVMPPMLEYLESLLTGTGHDLDLRTLKLVDQLSGRTLGLRADITPQVARIDAHLLNRPGVTRLCYAGNVLHARPAGFNATREPIQIGAEIYGHAGLEADVEIQELMLAALQVAGLSDIRLDLCHAGILEALLAALPSIRQIEEAMFAALETKDVPALRELTQGLPDTERDALLALPTLYGGVEVIERARATLPASPAIGRALDELAALAAQVSNASVNIDLSDLRGYHYHSGVMFTAYVSGLPNYVARGGRYDKVGEAFGRARPATGFSLDLREVAALSPVEVRAQAIFAPWDADPALRFAITTLRANGEIVIQSLPGHTHELDEFNCDRQLQRQGANWVVVPR.

It belongs to the class-II aminoacyl-tRNA synthetase family. HisZ subfamily. In terms of assembly, heteromultimer composed of HisG and HisZ subunits.

It localises to the cytoplasm. It functions in the pathway amino-acid biosynthesis; L-histidine biosynthesis; L-histidine from 5-phospho-alpha-D-ribose 1-diphosphate: step 1/9. Functionally, required for the first step of histidine biosynthesis. May allow the feedback regulation of ATP phosphoribosyltransferase activity by histidine. This chain is ATP phosphoribosyltransferase regulatory subunit, found in Cupriavidus metallidurans (strain ATCC 43123 / DSM 2839 / NBRC 102507 / CH34) (Ralstonia metallidurans).